The following is a 259-amino-acid chain: HTH-type transcriptional regulator Rv1719 (259 aa).

Residues 13-75 (IQVIARAAEL…GARGPYRLGP (63 aa)) enclose the HTH iclR-type domain. Residues 35 to 54 (QAEIGERVGMARSTVSRILN) constitute a DNA-binding region (H-T-H motif). The region spanning 88 to 259 (VVTEMHPFLT…AWFNGTEDRK (172 aa)) is the IclR-ED domain.

Homodimer.

Its function is as follows. Binds to the upstream region of Rv1714 and probably modulates the expression of the downstream gene(s). The polypeptide is HTH-type transcriptional regulator Rv1719 (Mycobacterium tuberculosis (strain ATCC 25618 / H37Rv)).